We begin with the raw amino-acid sequence, 159 residues long: Large ribosomal subunit protein eL29 (159 aa).

Positions 1–26 are enriched in basic residues; the sequence is MAKSKNHTTHNQSRKWHRNGIKKPRS. Positions 1-32 are disordered; sequence MAKSKNHTTHNQSRKWHRNGIKKPRSQRYESL. Lys5 carries the post-translational modification N6-methyllysine. Position 31 is a phosphoserine (Ser31). Lys33 carries the N6-acetyllysine modification. Residues 117 to 127 show a composition bias toward basic residues; the sequence is RLCRPKAKAKA. Residues 117–159 form a disordered region; that stretch reads RLCRPKAKAKAKAKDQTKAQAAAPASVPAQAPKRTQAPTKASE. Low complexity predominate over residues 134–149; it reads KAQAAAPASVPAQAPK. At Ser142 the chain carries Phosphoserine.

This sequence belongs to the eukaryotic ribosomal protein eL29 family. In terms of assembly, component of the large ribosomal subunit.

The protein localises to the cytoplasm. Functionally, component of the large ribosomal subunit. The ribosome is a large ribonucleoprotein complex responsible for the synthesis of proteins in the cell. The chain is Large ribosomal subunit protein eL29 (RPL29) from Homo sapiens (Human).